We begin with the raw amino-acid sequence, 100 residues long: Replication restart protein PriB (100 aa).

Positions 1–99 (MGFNNLVSLA…LRIQNIKEYK (99 aa)) constitute an SSB domain.

This sequence belongs to the PriB family. Homodimer. Interacts with PriA and DnaT. Component of the replication restart primosome. Primosome assembly occurs via a 'hand-off' mechanism. PriA binds to replication forks, subsequently PriB then DnaT bind; DnaT then displaces ssDNA to generate the helicase loading substrate.

In terms of biological role, involved in the restart of stalled replication forks, which reloads the replicative helicase on sites other than the origin of replication; the PriA-PriB pathway is the major replication restart pathway. During primosome assembly it facilitates complex formation between PriA and DnaT on DNA; stabilizes PriA on DNA. Stimulates the DNA unwinding activity of PriA helicase. This chain is Replication restart protein PriB, found in Neisseria meningitidis serogroup C (strain 053442).